Consider the following 391-residue polypeptide: MFLKAVVLTVALVAITGTQAEVTSDQVANVMWDYFTQLSNNAKEAVEQLQKTDVTQQLNTLFQDKLGNINTYADDLQNKLVPFAVQLSGHLTKETERVREEIQKELEDLRANMMPHANKVSQMFGDNVQKLQEHLRPYATDLQAQINAQTQDMKRQLTPYIQRMQTTIQDNVENLQSSMVPFANELKEKFNQNMEGLKGQLTPRANELKATIDQNLEDLRSRLAPLAEGVQEKLNHQMEGLAFQMKKNAEELQTKVSTNIDQLQKNLAPLVEDVQSKLKGNTEGLQKSLEDLNKQLDQQVEVFRRAVEPLGDKFNMALVQQMEKFRQQLGSDSGDVESHLSFLEKNLREKVSSFMSTLQKKGSPDQPLALPLPEQVQEQVQEQVQPKPLES.

Residues 1 to 20 form the signal peptide; that stretch reads MFLKAVVLTVALVAITGTQA. 13 consecutive repeat copies span residues 33–54, 60–81, 82–103, 115–136, 137–158, 159–180, 181–202, 203–224, 225–246, 247–268, 269–286, 287–308, and 309–330. The interval 33 to 330 is 13 X 22 AA approximate tandem repeats; it reads DYFTQLSNNA…QMEKFRQQLG (298 aa). Ser333 is modified (phosphoserine). A disordered region spans residues 354–391; that stretch reads FMSTLQKKGSPDQPLALPLPEQVQEQVQEQVQPKPLES. Low complexity predominate over residues 371 to 391; that stretch reads PLPEQVQEQVQEQVQPKPLES.

It belongs to the apolipoprotein A1/A4/E family. Homodimer. Secreted in plasma.

It localises to the secreted. Functionally, may have a role in chylomicrons and VLDL secretion and catabolism. Required for efficient activation of lipoprotein lipase by ApoC-II; potent activator of LCAT. Apoa-IV is a major component of HDL and chylomicrons. The chain is Apolipoprotein A-IV (Apoa4) from Rattus norvegicus (Rat).